The following is a 296-amino-acid chain: Probable AP endonuclease (296 aa).

Cysteines 16 and 20 form a disulfide. The Zn(2+) site is built by His-78, His-115, Glu-142, His-182, His-218, Asp-231, His-233, and Glu-271.

Belongs to the AP endonuclease 2 family. Zn(2+) serves as cofactor.

The protein resides in the host nucleus. Its subcellular location is the host cytoplasm. It localises to the virion. In terms of biological role, endonuclease that plays a role in DNA repair. Cleaves phosphodiester bonds on the 5' side of apurinic or apyrimidinic sites (AP sites). In addition to endonuclease activity, the ASFV enzyme has a proofreading 3'-5' exonuclease activity that is considerably more efficient in the elimination of a mismatch than in that of a correctly paired base. Displays 3'-phosphatase and 3'-repair diesterase activities. The single nucleotide gaps generated by the AP endonuclease are filled by the viral AP endonuclease and DNA ligase. The chain is Probable AP endonuclease from Ornithodoros (relapsing fever ticks).